A 509-amino-acid chain; its full sequence is tRNA-2-methylthio-N(6)-dimethylallyladenosine synthase (509 aa).

Over residues 1 to 15 (MNEQQRLASRQANSS) the composition is skewed to polar residues. The tract at residues 1-25 (MNEQQRLASRQANSSTKKEEKDYSK) is disordered. The segment covering 16–25 (TKKEEKDYSK) has biased composition (basic and acidic residues). The MTTase N-terminal domain occupies 66–184 (RKFYIRTYGC…LPYILKDAMF (119 aa)). Cysteine 75, cysteine 111, cysteine 145, cysteine 221, cysteine 225, and cysteine 228 together coordinate [4Fe-4S] cluster. A Radical SAM core domain is found at 207 to 437 (RRGDIKAWVN…NTLVNEYGVN (231 aa)). Positions 440–503 (KRYIGQIVEV…TWSLNGELVK (64 aa)) constitute a TRAM domain.

It belongs to the methylthiotransferase family. MiaB subfamily. Monomer. Requires [4Fe-4S] cluster as cofactor.

Its subcellular location is the cytoplasm. It carries out the reaction N(6)-dimethylallyladenosine(37) in tRNA + (sulfur carrier)-SH + AH2 + 2 S-adenosyl-L-methionine = 2-methylsulfanyl-N(6)-dimethylallyladenosine(37) in tRNA + (sulfur carrier)-H + 5'-deoxyadenosine + L-methionine + A + S-adenosyl-L-homocysteine + 2 H(+). Functionally, catalyzes the methylthiolation of N6-(dimethylallyl)adenosine (i(6)A), leading to the formation of 2-methylthio-N6-(dimethylallyl)adenosine (ms(2)i(6)A) at position 37 in tRNAs that read codons beginning with uridine. In Bacillus mycoides (strain KBAB4) (Bacillus weihenstephanensis), this protein is tRNA-2-methylthio-N(6)-dimethylallyladenosine synthase.